A 356-amino-acid polypeptide reads, in one-letter code: UDP-N-acetylglucosamine--N-acetylmuramyl-(pentapeptide) pyrophosphoryl-undecaprenol N-acetylglucosamine transferase (356 aa).

UDP-N-acetyl-alpha-D-glucosamine contacts are provided by residues 10-12 (TAG), N123, R159, S193, I240, and Q284.

This sequence belongs to the glycosyltransferase 28 family. MurG subfamily.

The protein localises to the cell membrane. The enzyme catalyses di-trans,octa-cis-undecaprenyl diphospho-N-acetyl-alpha-D-muramoyl-L-alanyl-D-glutamyl-meso-2,6-diaminopimeloyl-D-alanyl-D-alanine + UDP-N-acetyl-alpha-D-glucosamine = di-trans,octa-cis-undecaprenyl diphospho-[N-acetyl-alpha-D-glucosaminyl-(1-&gt;4)]-N-acetyl-alpha-D-muramoyl-L-alanyl-D-glutamyl-meso-2,6-diaminopimeloyl-D-alanyl-D-alanine + UDP + H(+). The protein operates within cell wall biogenesis; peptidoglycan biosynthesis. Functionally, cell wall formation. Catalyzes the transfer of a GlcNAc subunit on undecaprenyl-pyrophosphoryl-MurNAc-pentapeptide (lipid intermediate I) to form undecaprenyl-pyrophosphoryl-MurNAc-(pentapeptide)GlcNAc (lipid intermediate II). The chain is UDP-N-acetylglucosamine--N-acetylmuramyl-(pentapeptide) pyrophosphoryl-undecaprenol N-acetylglucosamine transferase from Corynebacterium glutamicum (strain ATCC 13032 / DSM 20300 / JCM 1318 / BCRC 11384 / CCUG 27702 / LMG 3730 / NBRC 12168 / NCIMB 10025 / NRRL B-2784 / 534).